We begin with the raw amino-acid sequence, 346 residues long: N-acetyl-gamma-glutamyl-phosphate reductase (346 aa).

The active site involves C150.

It belongs to the NAGSA dehydrogenase family. Type 1 subfamily.

It localises to the cytoplasm. The catalysed reaction is N-acetyl-L-glutamate 5-semialdehyde + phosphate + NADP(+) = N-acetyl-L-glutamyl 5-phosphate + NADPH + H(+). The protein operates within amino-acid biosynthesis; L-arginine biosynthesis; N(2)-acetyl-L-ornithine from L-glutamate: step 3/4. Its function is as follows. Catalyzes the NADPH-dependent reduction of N-acetyl-5-glutamyl phosphate to yield N-acetyl-L-glutamate 5-semialdehyde. This Desulforamulus reducens (strain ATCC BAA-1160 / DSM 100696 / MI-1) (Desulfotomaculum reducens) protein is N-acetyl-gamma-glutamyl-phosphate reductase.